Reading from the N-terminus, the 23-residue chain is Protein male-specific 40 (23 aa).

In terms of tissue distribution, during early embryogenesis expression is initially detected at the early cleavage stages in the nucleus of two discrete cells. Subsequently, expression is abundant in the cytoplasm of the newly formed pole cells. Male-specific expression during the third larval instar.

The protein resides in the cytoplasm. It is found in the nucleus. The protein is Protein male-specific 40 of Drosophila melanogaster (Fruit fly).